Consider the following 240-residue polypeptide: tRNA pseudouridine synthase B (240 aa).

The Nucleophile role is filled by Asp-48.

The protein belongs to the pseudouridine synthase TruB family. Type 1 subfamily.

It catalyses the reaction uridine(55) in tRNA = pseudouridine(55) in tRNA. Functionally, responsible for synthesis of pseudouridine from uracil-55 in the psi GC loop of transfer RNAs. The chain is tRNA pseudouridine synthase B from Bacteroides thetaiotaomicron (strain ATCC 29148 / DSM 2079 / JCM 5827 / CCUG 10774 / NCTC 10582 / VPI-5482 / E50).